An 84-amino-acid chain; its full sequence is Large ribosomal subunit protein bL27 (84 aa).

Residues 1–21 form a disordered region; it reads MAHKKGGGSSKNGRDSQSKRL.

It belongs to the bacterial ribosomal protein bL27 family.

The chain is Large ribosomal subunit protein bL27 from Brachyspira hyodysenteriae (strain ATCC 49526 / WA1).